An 84-amino-acid chain; its full sequence is Large ribosomal subunit protein bL28 (84 aa).

This sequence belongs to the bacterial ribosomal protein bL28 family.

This is Large ribosomal subunit protein bL28 from Deinococcus geothermalis (strain DSM 11300 / CIP 105573 / AG-3a).